The chain runs to 173 residues: Crossover junction endodeoxyribonuclease RuvC (173 aa).

Catalysis depends on residues D8, E67, and D139. Mg(2+)-binding residues include D8, E67, and D139.

The protein belongs to the RuvC family. In terms of assembly, homodimer which binds Holliday junction (HJ) DNA. The HJ becomes 2-fold symmetrical on binding to RuvC with unstacked arms; it has a different conformation from HJ DNA in complex with RuvA. In the full resolvosome a probable DNA-RuvA(4)-RuvB(12)-RuvC(2) complex forms which resolves the HJ. Requires Mg(2+) as cofactor.

Its subcellular location is the cytoplasm. It carries out the reaction Endonucleolytic cleavage at a junction such as a reciprocal single-stranded crossover between two homologous DNA duplexes (Holliday junction).. Functionally, the RuvA-RuvB-RuvC complex processes Holliday junction (HJ) DNA during genetic recombination and DNA repair. Endonuclease that resolves HJ intermediates. Cleaves cruciform DNA by making single-stranded nicks across the HJ at symmetrical positions within the homologous arms, yielding a 5'-phosphate and a 3'-hydroxyl group; requires a central core of homology in the junction. The consensus cleavage sequence is 5'-(A/T)TT(C/G)-3'. Cleavage occurs on the 3'-side of the TT dinucleotide at the point of strand exchange. HJ branch migration catalyzed by RuvA-RuvB allows RuvC to scan DNA until it finds its consensus sequence, where it cleaves and resolves the cruciform DNA. The chain is Crossover junction endodeoxyribonuclease RuvC from Shewanella sediminis (strain HAW-EB3).